Here is a 299-residue protein sequence, read N- to C-terminus: tRNA pseudouridine synthase B (299 aa).

Asp45 functions as the Nucleophile in the catalytic mechanism.

The protein belongs to the pseudouridine synthase TruB family. Type 1 subfamily.

The enzyme catalyses uridine(55) in tRNA = pseudouridine(55) in tRNA. In terms of biological role, responsible for synthesis of pseudouridine from uracil-55 in the psi GC loop of transfer RNAs. This chain is tRNA pseudouridine synthase B, found in Streptomyces griseus subsp. griseus (strain JCM 4626 / CBS 651.72 / NBRC 13350 / KCC S-0626 / ISP 5235).